The sequence spans 433 residues: Pyrimidine-nucleoside phosphorylase (433 aa).

81 to 83 (KHS) is a phosphate binding site. K(+) contacts are provided by Gly-88 and Thr-90. Residues Thr-92, 108–110 (KMS), and Thr-120 contribute to the phosphate site. 2 residues coordinate substrate: Arg-168 and Lys-187. K(+)-binding residues include Leu-243, Ala-246, and Glu-255.

Belongs to the thymidine/pyrimidine-nucleoside phosphorylase family. As to quaternary structure, homodimer. The cofactor is K(+).

It catalyses the reaction uridine + phosphate = alpha-D-ribose 1-phosphate + uracil. The enzyme catalyses thymidine + phosphate = 2-deoxy-alpha-D-ribose 1-phosphate + thymine. It carries out the reaction 2'-deoxyuridine + phosphate = 2-deoxy-alpha-D-ribose 1-phosphate + uracil. Its function is as follows. Catalyzes phosphorolysis of the pyrimidine nucleosides uridine, thymidine and 2'-deoxyuridine with the formation of the corresponding pyrimidine base and ribose-1-phosphate. The sequence is that of Pyrimidine-nucleoside phosphorylase from Bacillus subtilis (strain 168).